The chain runs to 735 residues: Serine/threonine-protein kinase BRSK2 (735 aa).

The 252-residue stretch at 20 to 271 (YRLEKTLGKG…LEHIQKHIWY (252 aa)) folds into the Protein kinase domain. Residues 26–34 (LGKGQTGLV) and Lys49 each bind ATP. Residue Asp142 is the Proton acceptor of the active site. Residue Thr175 is modified to Phosphothreonine; by LKB1. A Phosphothreonine; by PKA modification is found at Thr261. Phosphoserine is present on Ser295. The UBA domain occupies 298-340 (DIDPDVLDSMHSLGCFRDRNKLLQDLLSEEENQEKMIYFLLLD). The span at 346–367 (PSHEDEDLPPRNEIDPPRKRVD) shows a compositional bias: basic and acidic residues. 2 disordered regions span residues 346–476 (PSHE…GVPW) and 492–516 (RFHRRKLQVPTPEEMSNLTPESSPE). Ser368, Ser383, Ser394, Ser413, Ser424, and Ser428 each carry phosphoserine. Positions 411–429 (SRSISGASSGLSTSPLSSP) are enriched in low complexity. The span at 432 to 446 (TPHPSPRGSPLPTPK) shows a compositional bias: pro residues. The residue at position 456 (Ser456) is a Phosphoserine. Phosphothreonine occurs at positions 460, 464, and 510. 3 positions are modified to phosphoserine: Ser513, Ser514, and Ser521. The KEN box motif lies at 604-606 (KEN). Positions 682-735 (KNGQAAQAPSTPAKRSAHGPLGDSAAAGPGGDTEYPMGKDMAKMGPPAARREQP) are disordered.

It belongs to the protein kinase superfamily. CAMK Ser/Thr protein kinase family. SNF1 subfamily. As to quaternary structure, interacts with FZR1, a regulatory subunit of the APC ubiquitin ligase complex. Interacts with COPS5. Interacts with PAK1. Mg(2+) is required as a cofactor. Post-translationally, may be phosphorylated at Thr-261 by PKA. Phosphorylated at Thr-175 by STK11/LKB1 in complex with STE20-related adapter-alpha (STRADA) pseudo kinase and CAB39. Not phosphorylated at Thr-175 by CaMKK2. In contrast, it is phosphorylated and activated by CaMKK1. May be inactivated via dephosphorylation of Thr-175 by PP2C. Polyubiquitinated by the APC complex in conjunction with FZR1, leading to its proteasomal degradation. Targeted for proteasomal degradation by interaction with COPS5. BRSK2 levels change during the cell cycle. BRSK2 levels are low at the G1/S boundary and gradually increase as cells progress into G2 phase. BRSK2 levels decrease rapidly at the end of mitosis. As to expression, detected in pancreas islets and in brain (at protein level). Detected in brain and pancreas.

The protein localises to the cytoplasm. The protein resides in the cytoskeleton. It is found in the microtubule organizing center. It localises to the centrosome. Its subcellular location is the perinuclear region. The protein localises to the endoplasmic reticulum. It carries out the reaction L-seryl-[protein] + ATP = O-phospho-L-seryl-[protein] + ADP + H(+). The enzyme catalyses L-threonyl-[protein] + ATP = O-phospho-L-threonyl-[protein] + ADP + H(+). It catalyses the reaction L-seryl-[tau protein] + ATP = O-phospho-L-seryl-[tau protein] + ADP + H(+). The catalysed reaction is L-threonyl-[tau protein] + ATP = O-phospho-L-threonyl-[tau protein] + ADP + H(+). Its activity is regulated as follows. Activated by phosphorylation on Thr-175 by STK11/LKB1. Its function is as follows. Serine/threonine-protein kinase that plays a key role in polarization of neurons and axonogenesis, cell cycle progress and insulin secretion. Phosphorylates CDK16, CDC25C, MAPT/TAU, PAK1 and WEE1. Following phosphorylation and activation by STK11/LKB1, acts as a key regulator of polarization of cortical neurons, probably by mediating phosphorylation of microtubule-associated proteins such as MAPT/TAU at 'Thr-504' and 'Ser-554'. Also regulates neuron polarization by mediating phosphorylation of WEE1 at 'Ser-642' in post-mitotic neurons, leading to down-regulate WEE1 activity in polarized neurons. Plays a role in the regulation of the mitotic cell cycle progress and the onset of mitosis. Plays a role in the regulation of insulin secretion in response to elevated glucose levels, probably via phosphorylation of CDK16 and PAK1. While BRSK2 phosphorylated at Thr-175 can inhibit insulin secretion, BRSK2 phosphorylated at Thr-261 can promote insulin secretion. Regulates reorganization of the actin cytoskeleton. May play a role in the apoptotic response triggered by endoplasmic reticulum (ER) stress. This is Serine/threonine-protein kinase BRSK2 (Brsk2) from Mus musculus (Mouse).